Here is a 473-residue protein sequence, read N- to C-terminus: H(+)/Cl(-) exchange transporter ClcA (473 aa).

Residues 1–32 (MKTDTPTFEAQQIVRLRRGRLIRRLVQRDKTP) lie on the Cytoplasmic side of the membrane. A helical transmembrane segment spans residues 33–69 (LAILLMAAVVGTLTGLVGVAFEKAVSWVQNMRIGALV). Residues 70–76 (QVADHAF) lie on the Periplasmic side of the membrane. A helical membrane pass occupies residues 77–100 (LLWPLAFILSALLAMVGYFLVRKF). The short motif at 106-110 (GSGIP) is the Selectivity filter part_1 element. Residue Ser107 coordinates chloride. Positions 109–116 (IPEIEGAL) form an intramembrane region, helical. Residues 117-123 (EELRPVR) lie on the Cytoplasmic side of the membrane. 2 helical membrane-spanning segments follow: residues 124-141 (WWRV…TLGA) and 148-166 (EGPT…LDVF). The Selectivity filter part_2 motif lies at 146–150 (GREGP). Residues 167–176 (RMRSAEARHT) are Cytoplasmic-facing. Intramembrane regions (helical) lie at residues 177–189 (LLAT…LSAA) and 193–201 (PLAGILFII). The Cytoplasmic portion of the chain corresponds to 202-214 (EEMRPQFRYNLIS). The helical transmembrane segment at 215–232 (IKAVFTGVIMSSIVFRIF) threads the bilayer. The Periplasmic portion of the chain corresponds to 233 to 252 (NGEAPIIEVGKLSNAPVNTL). Residues 253–281 (WLYLVLGIIFGCVGPVFNTLVLRTQDMFQ) traverse the membrane as a helical segment. Residues 282 to 287 (RFHGGE) are Cytoplasmic-facing. A helical membrane pass occupies residues 288-309 (IKKWVLMGGAIGGLCGILGLIE). Residues 310 to 329 (PEAAGGGFNLIPIAAAGNFS) lie on the Periplasmic side of the membrane. 2 helical membrane passes run 330–349 (VGLL…LCFS) and 355–376 (GIFA…MAAA). The Selectivity filter part_3 motif lies at 355-359 (GIFAP). The chloride site is built by Ile356 and Phe357. Residues 377–386 (VLFPQYHLEA) are Periplasmic-facing. The helical intramembrane region spans 387-401 (GTFAIAGMGALMAAS). The note=Loop between two helices intramembrane region spans 402–404 (VRA). The segment at residues 405 to 416 (PLTGIVLVLEMT) is an intramembrane region (helical). Positions 417–421 (DNYQL) form an intramembrane region, note=Loop between two helices. A helical transmembrane segment spans residues 422–438 (ILPMIITCLGATLLAQF). Topologically, residues 439–473 (LGGKPLYSTILARTLAKQDAEQAAKNQSTPAGENT) are cytoplasmic. Tyr445 is a chloride binding site.

It belongs to the chloride channel (TC 2.A.49) family. ClcA subfamily. As to quaternary structure, homodimer.

The protein localises to the cell inner membrane. The catalysed reaction is 2 chloride(in) + H(+)(out) = 2 chloride(out) + H(+)(in). In terms of biological role, proton-coupled chloride transporter. Functions as antiport system and exchanges two chloride ions for 1 proton. Probably acts as an electrical shunt for an outwardly-directed proton pump that is linked to amino acid decarboxylation, as part of the extreme acid resistance (XAR) response. In Salmonella arizonae (strain ATCC BAA-731 / CDC346-86 / RSK2980), this protein is H(+)/Cl(-) exchange transporter ClcA.